A 569-amino-acid polypeptide reads, in one-letter code: DNA-binding protein eta2 (569 aa).

Disordered regions lie at residues 1–26 (MMLAIDMTINENQGTRSNLESPTLSC) and 133–159 (KRKIARSSSDDSESKVESTNSFNAKKR). Positions 9 to 26 (INENQGTRSNLESPTLSC) are enriched in polar residues. Ser-21 bears the Phosphoserine mark. Myb-like domains follow at residues 322 to 371 (LDPK…RFVV) and 377 to 459 (ETID…EKTI). Positions 459–487 (IASYSSNQRQEEDQGKKRKKRKKKKSKGK) are disordered. Positions 474-487 (KKRKKRKKKKSKGK) are enriched in basic residues.

The protein localises to the nucleus. The protein is DNA-binding protein eta2 (eta2) of Schizosaccharomyces pombe (strain 972 / ATCC 24843) (Fission yeast).